The following is a 516-amino-acid chain: Rho guanine nucleotide exchange factor 9 (516 aa).

An SH3 domain is found at 8–67; sequence DSIVSAEAVWDHVTMANRELAFKAGDVIKVLDASNKDWWWGQIDDEEGWFPASFVRLWVN. An interaction with GPHN region spans residues 100–110; the sequence is RDQMRANVINE. Residues 103 to 287 enclose the DH domain; the sequence is MRANVINEIM…RNVTQQINER (185 aa). In terms of domain architecture, PH spans 318-425; the sequence is ELIYTGEMAW…WLRAFREERK (108 aa). Residues 450 to 480 are disordered; sequence RKASKQKGVNSARSVPPSYPPPQDPLNQGQY. S502 bears the Phosphoserine mark.

Interacts with GPHN. As to expression, detected in embryonic and adult brain.

The protein resides in the cytoplasm. It localises to the postsynaptic density. Acts as a guanine nucleotide exchange factor (GEF) for CDC42. Promotes formation of GPHN clusters. The chain is Rho guanine nucleotide exchange factor 9 (Arhgef9) from Mus musculus (Mouse).